A 181-amino-acid polypeptide reads, in one-letter code: Putative poly [ADP-ribose] polymerase-like 100L (181 aa).

A PARP catalytic domain is found at 1–181 (MDNLKEEETN…KIKYIIHITK (181 aa)).

It carries out the reaction NAD(+) + (ADP-D-ribosyl)n-acceptor = nicotinamide + (ADP-D-ribosyl)n+1-acceptor + H(+).. This is Putative poly [ADP-ribose] polymerase-like 100L from Invertebrate iridescent virus 6 (IIV-6).